A 101-amino-acid chain; its full sequence is Integration host factor subunit beta (101 aa).

This sequence belongs to the bacterial histone-like protein family. As to quaternary structure, heterodimer of an alpha and a beta chain.

Its function is as follows. This protein is one of the two subunits of integration host factor, a specific DNA-binding protein that functions in genetic recombination as well as in transcriptional and translational control. In Nitrobacter hamburgensis (strain DSM 10229 / NCIMB 13809 / X14), this protein is Integration host factor subunit beta.